A 354-amino-acid chain; its full sequence is Ferrochelatase (354 aa).

Residues His-204 and Glu-306 each coordinate Fe cation.

It belongs to the ferrochelatase family.

It is found in the cytoplasm. It catalyses the reaction heme b + 2 H(+) = protoporphyrin IX + Fe(2+). The protein operates within porphyrin-containing compound metabolism; protoheme biosynthesis; protoheme from protoporphyrin-IX: step 1/1. Catalyzes the ferrous insertion into protoporphyrin IX. This chain is Ferrochelatase, found in Coxiella burnetii (strain CbuG_Q212) (Coxiella burnetii (strain Q212)).